A 93-amino-acid polypeptide reads, in one-letter code: Small ribosomal subunit protein uS19 (93 aa).

It belongs to the universal ribosomal protein uS19 family.

Its function is as follows. Protein S19 forms a complex with S13 that binds strongly to the 16S ribosomal RNA. This is Small ribosomal subunit protein uS19 from Blochmanniella floridana.